An 804-amino-acid polypeptide reads, in one-letter code: Ribonucleoside-diphosphate reductase large subunit-like protein (804 aa).

It belongs to the ribonucleoside diphosphate reductase large chain family.

It localises to the virion. Its subcellular location is the host cytoplasm. Does not possess a ribonucleotide reductase activity. Betaherpesviruses probably use another strategy to expand the dNTP pool in a quiescent host cell. The chain is Ribonucleoside-diphosphate reductase large subunit-like protein from Homo sapiens (Human).